The following is a 295-amino-acid chain: ATP synthase gamma chain (295 aa).

The protein belongs to the ATPase gamma chain family. In terms of assembly, F-type ATPases have 2 components, CF(1) - the catalytic core - and CF(0) - the membrane proton channel. CF(1) has five subunits: alpha(3), beta(3), gamma(1), delta(1), epsilon(1). CF(0) has three main subunits: a, b and c.

The protein resides in the cell inner membrane. In terms of biological role, produces ATP from ADP in the presence of a proton gradient across the membrane. The gamma chain is believed to be important in regulating ATPase activity and the flow of protons through the CF(0) complex. The sequence is that of ATP synthase gamma chain from Methylorubrum populi (strain ATCC BAA-705 / NCIMB 13946 / BJ001) (Methylobacterium populi).